We begin with the raw amino-acid sequence, 301 residues long: Probable alpha-L-glutamate ligase (301 aa).

The region spanning 104–287 is the ATP-grasp domain; the sequence is LQLLSRRGIG…VAGMIIEYLE (184 aa). ATP contacts are provided by residues lysine 141, 178–179, aspartate 187, and 211–213; these read EY and RSN. Positions 248, 260, and 262 each coordinate Mg(2+). 3 residues coordinate Mn(2+): aspartate 248, glutamate 260, and asparagine 262.

This sequence belongs to the RimK family. Requires Mg(2+) as cofactor. The cofactor is Mn(2+).

The chain is Probable alpha-L-glutamate ligase from Pseudomonas savastanoi pv. phaseolicola (strain 1448A / Race 6) (Pseudomonas syringae pv. phaseolicola (strain 1448A / Race 6)).